A 356-amino-acid chain; its full sequence is tRNA N6-adenosine threonylcarbamoyltransferase (356 aa).

2 residues coordinate Fe cation: histidine 115 and histidine 119. Residues 138–142 (LVSGG), aspartate 171, glycine 184, and asparagine 283 contribute to the substrate site. Residue aspartate 311 coordinates Fe cation.

Belongs to the KAE1 / TsaD family. Requires Fe(2+) as cofactor.

It localises to the cytoplasm. The enzyme catalyses L-threonylcarbamoyladenylate + adenosine(37) in tRNA = N(6)-L-threonylcarbamoyladenosine(37) in tRNA + AMP + H(+). Functionally, required for the formation of a threonylcarbamoyl group on adenosine at position 37 (t(6)A37) in tRNAs that read codons beginning with adenine. Is involved in the transfer of the threonylcarbamoyl moiety of threonylcarbamoyl-AMP (TC-AMP) to the N6 group of A37, together with TsaE and TsaB. TsaD likely plays a direct catalytic role in this reaction. This chain is tRNA N6-adenosine threonylcarbamoyltransferase, found in Prochlorococcus marinus (strain NATL1A).